Reading from the N-terminus, the 1058-residue chain is MHIIKPVWLTHGGERKDFEVYSCDVSPDGSRLVTAAGDGYVRIWSTEAICNTNDPAVASKPKQLASMSNHSGTIHTVRFSPNGKYLASGADDKIVCIYTLDTNPPSHATTFGSNEAPPVENWRTVRRLIGHDNDVQDLGWSYDSSILVSVGLDSKVVVWSGHTFEKLKTISIHQSHVKGITFDPANKYFATASDDRTVRIFRFTSPAPNSTAHDQMNNFVLEQTISAPFANSPLTAYFRRCSWSPDGMHIAAANAVNGPVSSVAIINRGSWDGDINLIGHEAPVEVCAFSPRLYASQPVDKQAMDNQHGAQNLVTVIACAGGDKSLSIWITSNPRPIVVAQELAAKSLSDLAWSPDGKCLYATALDGTILAVRFEDGDLGYATAMEENEKSLTKFGTNRKGAGITETPDGLLLEEKSKAGEIKGVEGRMGALMGDDQADNITNEKPALLPSNAPTPARPSSPAPDAQKSQPNGTATPSAPEPEKPDPYQAKLERLKQRPTYTKDGKKRIAPLLVSGAGAAESSLPQARLMASVSNQVKADTPQSIVDLSKPFDGLPKGGLATLLFGNKRKLAQLEEDDDGHVEKRVALASQNGATPLLTNTPDGLLPARPQPAPTGQQPTPEFIRPAVTNPCMAMSQVRLAVPKVRNQILRAIDPNGKPTEPPSASGESSKSRVDVVFEARNPSAASLTGRAVDREPVRLTLFRGEQPLWQDFLPRTVLLVTGNQSMWAAACEDGSVYIWTPAGRRLVSALVLEAQPVILECNGPWILCISAVGMCYVWNVKHLSSPHPPVSLQPALDAAIHTLGAHPSAAPAITNARINSEGRIVVAMSNGEGYSYSPSMFTWQRISEPWWAVGSQYWNTTEAPVGNLQTADAQKDKDAKAAVSAGIIPFLERNTTSETLLRGRAYFLQRLIKVLLSREGYESFESSVSIAHLENRLAAALSLGAKEEFRLYLSMYAKRIGAEGLKMKVEELLKGLIGGLFEEDEAGTAQRLQENEQEDRNWRESSETLCGWPREVLLKEVILALGKHRDLQRVTVPYAKLLGVVDGESDVGDAMET.

WD repeat units lie at residues Arg15–Asp54, Asn69–Ala108, Gly130–Thr169, Ile172–Thr211, Pro233–Asn276, Gly279–Val339, and Leu343–Ala384. Disordered stretches follow at residues Gly427–Tyr488, Ser590–Gln618, and Ala652–Ser672. 2 stretches are compositionally biased toward polar residues: residues Gln467 to Pro477 and Ser590 to Pro602.

It belongs to the WD repeat HIR1 family.

The protein resides in the nucleus. In terms of biological role, required for replication-independent chromatin assembly and for the periodic repression of histone gene transcription during the cell cycle. In Aspergillus oryzae (strain ATCC 42149 / RIB 40) (Yellow koji mold), this protein is Protein HIR1 (HIR1).